Consider the following 348-residue polypeptide: uncharacterized protein (348 aa).

The protein localises to the virion. This is an uncharacterized protein from Acanthamoeba polyphaga mimivirus (APMV).